We begin with the raw amino-acid sequence, 274 residues long: Large ribosomal subunit protein uL2 (274 aa).

Disordered stretches follow at residues K28–I54 and R221–K274. A compositionally biased stretch (polar residues) spans K39 to I49.

Belongs to the universal ribosomal protein uL2 family. Part of the 50S ribosomal subunit. Forms a bridge to the 30S subunit in the 70S ribosome.

Its function is as follows. One of the primary rRNA binding proteins. Required for association of the 30S and 50S subunits to form the 70S ribosome, for tRNA binding and peptide bond formation. It has been suggested to have peptidyltransferase activity; this is somewhat controversial. Makes several contacts with the 16S rRNA in the 70S ribosome. This chain is Large ribosomal subunit protein uL2, found in Photorhabdus laumondii subsp. laumondii (strain DSM 15139 / CIP 105565 / TT01) (Photorhabdus luminescens subsp. laumondii).